The primary structure comprises 332 residues: L-lactate dehydrogenase C chain (332 aa).

Position 2 is a blocked amino end (Ser) (Ser2). NAD(+)-binding positions include 29-57 (GNVGMACAISILLKGLADELALVDADENK) and Arg99. Residues Arg106, Asn138, and Arg169 each coordinate substrate. Asn138 lines the NAD(+) pocket. Residue His193 is the Proton acceptor of the active site. Position 248 (Thr248) interacts with substrate.

This sequence belongs to the LDH/MDH superfamily. LDH family. As to quaternary structure, homotetramer. Interacts with RABL2/RABL2A; binds preferentially to GTP-bound RABL2.

The protein resides in the cytoplasm. It catalyses the reaction (S)-lactate + NAD(+) = pyruvate + NADH + H(+). The protein operates within fermentation; pyruvate fermentation to lactate; (S)-lactate from pyruvate: step 1/1. Possible role in sperm motility. This is L-lactate dehydrogenase C chain (Ldhc) from Rattus norvegicus (Rat).